A 122-amino-acid polypeptide reads, in one-letter code: Large ribosomal subunit protein uL18 (122 aa).

Belongs to the universal ribosomal protein uL18 family. Part of the 50S ribosomal subunit; part of the 5S rRNA/L5/L18/L25 subcomplex. Contacts the 5S and 23S rRNAs.

Its function is as follows. This is one of the proteins that bind and probably mediate the attachment of the 5S RNA into the large ribosomal subunit, where it forms part of the central protuberance. The protein is Large ribosomal subunit protein uL18 of Synechococcus sp. (strain JA-3-3Ab) (Cyanobacteria bacterium Yellowstone A-Prime).